The following is a 732-amino-acid chain: Glycine--tRNA ligase (732 aa).

A mitochondrion-targeting transit peptide spans 1–27 (MRHVLSLVYKCSVFSKQVTVFSNHLRL). In terms of domain architecture, WHEP-TRS spans 61–117 (ILAPLRANVKEQGDLVRKLKEEKAPEIDIKKAVAELKTRKKILEDKELSLAPAEDLF). Residue Glu297 participates in glycine binding. ATP is bound by residues 329–331 (RNE) and 340–341 (RV). Glu348 is a binding site for glycine. 453 to 454 (EC) is an ATP binding site. Position 572–574 (572–574 (EPS)) interacts with glycine. Arg579 contacts ATP.

This sequence belongs to the class-II aminoacyl-tRNA synthetase family. As to quaternary structure, homodimer.

It is found in the mitochondrion. The protein resides in the cytoplasm. Its subcellular location is the cell projection. It localises to the axon. The enzyme catalyses tRNA(Gly) + glycine + ATP = glycyl-tRNA(Gly) + AMP + diphosphate. It catalyses the reaction 2 ATP + H(+) = P(1),P(4)-bis(5'-adenosyl) tetraphosphate + diphosphate. Catalyzes the ATP-dependent ligation of glycine to the 3'-end of its cognate tRNA, via the formation of an aminoacyl-adenylate intermediate (Gly-AMP). Also produces diadenosine tetraphosphate (Ap4A), a universal pleiotropic signaling molecule needed for cell regulation pathways, by direct condensation of 2 ATPs. Thereby, may play a special role in Ap4A homeostasis. Required for terminal arborization of both dendrites and axons during development. The polypeptide is Glycine--tRNA ligase (Bombyx mori (Silk moth)).